The sequence spans 430 residues: Adenylosuccinate synthetase (430 aa).

GTP contacts are provided by residues 12–18 (GDEGKGK) and 40–42 (GHT). The active-site Proton acceptor is the Asp-13. Positions 13 and 40 each coordinate Mg(2+). Residues 13–16 (DEGK), 38–41 (NAGH), Thr-130, Arg-144, Gln-224, Thr-239, and Arg-303 contribute to the IMP site. His-41 serves as the catalytic Proton donor. 299–305 (TVTSRKR) lines the substrate pocket. GTP-binding positions include Arg-305, 331–333 (KLD), and 413–415 (STS).

It belongs to the adenylosuccinate synthetase family. As to quaternary structure, homodimer. The cofactor is Mg(2+).

The protein resides in the cytoplasm. The enzyme catalyses IMP + L-aspartate + GTP = N(6)-(1,2-dicarboxyethyl)-AMP + GDP + phosphate + 2 H(+). Its pathway is purine metabolism; AMP biosynthesis via de novo pathway; AMP from IMP: step 1/2. Plays an important role in the de novo pathway of purine nucleotide biosynthesis. Catalyzes the first committed step in the biosynthesis of AMP from IMP. This chain is Adenylosuccinate synthetase, found in Pelagibacter ubique (strain HTCC1062).